A 724-amino-acid chain; its full sequence is Palmitoyltransferase AKR1 (724 aa).

The Cytoplasmic portion of the chain corresponds to 1-308 (MSGQLNVAED…HAKMVTFFTP (308 aa)). 6 ANK repeats span residues 54–84 (PTLV…DVKA), 90–119 (EQVS…DVNI), 124–153 (LEAT…DPLI), 157–187 (QGYN…PVDS), 191–220 (TGKT…DVRV), and 224–253 (GGFT…DVFL). A helical membrane pass occupies residues 309-329 (WLILGLILSFFAYFSILLAIL). Residues 330 to 331 (GC) lie on the Lumenal side of the membrane. A helical transmembrane segment spans residues 332 to 352 (LLTVLAAGYGLYNFVFPSFIL). The Cytoplasmic segment spans residues 353 to 360 (MKRIVIFK). The chain crosses the membrane as a helical span at residues 361–381 (TPLLAGILSGTIFWLLYVWLF). At 382–392 (KMLPATFDDEP) the chain is on the lumenal side. A helical membrane pass occupies residues 393–413 (ILNLTVFALFAGVVFLLTKLL). Residues 414–489 (QSDPGYIVPA…YNYIGFRNHK (76 aa)) are Cytoplasmic-facing. One can recognise a DHHC domain in the interval 446 to 496 (HFCIHSWIRLPLRAKYKRFVHSVILRYDHYCPWIYNYIGFRNHKIFIYFIL). Residue Cys476 is the S-palmitoyl cysteine intermediate of the active site. The helical transmembrane segment at 490–510 (IFIYFILLLDLGILALAKLCL) threads the bilayer. Over 511-543 (EYFDELKDHAKNKDALKCSILSKDLCAGFTYDP) the chain is Lumenal. The helical transmembrane segment at 544 to 564 (FTLFLLEWVCVQGMWILALSF) threads the bilayer. Over 565-724 (VQFFECLKGV…ERVISIEEIV (160 aa)) the chain is Cytoplasmic.

The protein belongs to the DHHC palmitoyltransferase family. AKR/ZDHHC17 subfamily.

It is found in the early endosome membrane. The protein localises to the golgi apparatus membrane. The catalysed reaction is L-cysteinyl-[protein] + hexadecanoyl-CoA = S-hexadecanoyl-L-cysteinyl-[protein] + CoA. Palmitoyltransferase specific for casein kinase 1. This chain is Palmitoyltransferase AKR1 (AKR1), found in Eremothecium gossypii (strain ATCC 10895 / CBS 109.51 / FGSC 9923 / NRRL Y-1056) (Yeast).